The following is a 290-amino-acid chain: Phosphate import ATP-binding protein PstB (290 aa).

The ABC transporter domain occupies 25–285 (LEARNLDFYY…PKTRRARDYL (261 aa)). ATP is bound at residue 57 to 64 (GPSGCGKS).

It belongs to the ABC transporter superfamily. Phosphate importer (TC 3.A.1.7) family. In terms of assembly, the complex is composed of two ATP-binding proteins (PstB), two transmembrane proteins (PstC and PstA) and a solute-binding protein (PstS).

The protein resides in the cell inner membrane. The enzyme catalyses phosphate(out) + ATP + H2O = ADP + 2 phosphate(in) + H(+). In terms of biological role, part of the ABC transporter complex PstSACB involved in phosphate import. Responsible for energy coupling to the transport system. This chain is Phosphate import ATP-binding protein PstB, found in Zymomonas mobilis subsp. mobilis (strain ATCC 31821 / ZM4 / CP4).